Consider the following 473-residue polypeptide: UDP-N-acetylmuramoylalanine--D-glutamate ligase (473 aa).

Residue 120-126 (GSNGKTT) coordinates ATP.

It belongs to the MurCDEF family.

The protein localises to the cytoplasm. It carries out the reaction UDP-N-acetyl-alpha-D-muramoyl-L-alanine + D-glutamate + ATP = UDP-N-acetyl-alpha-D-muramoyl-L-alanyl-D-glutamate + ADP + phosphate + H(+). It participates in cell wall biogenesis; peptidoglycan biosynthesis. Its function is as follows. Cell wall formation. Catalyzes the addition of glutamate to the nucleotide precursor UDP-N-acetylmuramoyl-L-alanine (UMA). This chain is UDP-N-acetylmuramoylalanine--D-glutamate ligase, found in Nitrosospira multiformis (strain ATCC 25196 / NCIMB 11849 / C 71).